The chain runs to 403 residues: L-lactate oxidase (403 aa).

Residues 21 to 375 (EGSVDFVNVF…KHFKLRHNPY (355 aa)) form the FMN hydroxy acid dehydrogenase domain. Tyr47 serves as a coordination point for pyruvate. Residues 99-101 (PVA), Ser128, and Gln150 contribute to the FMN site. Residue Tyr152 coordinates pyruvate. Thr178 lines the FMN pocket. The pyruvate site is built by Arg187 and Tyr220. Residue Lys246 participates in FMN binding. Pyruvate contacts are provided by His270 and Arg273. The active-site Proton acceptor is His270. FMN contacts are provided by residues 301–305 (DSGVR) and Arg325.

Belongs to the FMN-dependent alpha-hydroxy acid dehydrogenase family. As to quaternary structure, homotetramer. It depends on FMN as a cofactor.

The catalysed reaction is (S)-lactate + O2 = pyruvate + H2O2. Functionally, catalyzes the oxidation of (S)-lactate (L-lactate) to pyruvate, with a reduction of O2 to H2O2. Is likely involved in the L-lactate aerobic metabolism of S.iniae that enables the bacterium to utilize L-lactate as an energy source for growth under aerobic conditions in the absence (or at low concentrations) of glucose. In Streptococcus iniae (Streptococcus shiloi), this protein is L-lactate oxidase.